The chain runs to 889 residues: Translation initiation factor IF-2 (889 aa).

Basic and acidic residues predominate over residues 115-236 (EAEAQAKAEA…EAERYSDHHI (122 aa)). Residues 115–293 (EAEAQAKAEA…RNRSTAPESM (179 aa)) form a disordered region. Positions 257 to 270 (GRRARNKNTAKTKR) are enriched in basic residues. Residues 271–280 (GGKDARDGRE) show a composition bias toward basic and acidic residues. The 170-residue stretch at 389 to 558 (PRAPVVTIMG…LLQAEVLELK (170 aa)) folds into the tr-type G domain. A G1 region spans residues 398–405 (GHVDHGKT). 398–405 (GHVDHGKT) contributes to the GTP binding site. Residues 423–427 (GITQH) are G2. The segment at 444–447 (DTPG) is G3. GTP is bound by residues 444–448 (DTPGH) and 498–501 (NKMD). The tract at residues 498–501 (NKMD) is G4. A G5 region spans residues 534–536 (SAK).

This sequence belongs to the TRAFAC class translation factor GTPase superfamily. Classic translation factor GTPase family. IF-2 subfamily.

Its subcellular location is the cytoplasm. One of the essential components for the initiation of protein synthesis. Protects formylmethionyl-tRNA from spontaneous hydrolysis and promotes its binding to the 30S ribosomal subunits. Also involved in the hydrolysis of GTP during the formation of the 70S ribosomal complex. The sequence is that of Translation initiation factor IF-2 from Shewanella sp. (strain ANA-3).